Consider the following 115-residue polypeptide: MSAQGHRLTAPVNSEKVYIVLGLSFALISITFLLSRNNLPHVGDNIHSLPHGDAYRDGTKAILYNSPNFGSRTSLNNSKNAAFAAVLLLSLLIYGSRCLSQRNHLCACGNNHSSN.

The Cytoplasmic portion of the chain corresponds to Met-1–Asn-13. A helical membrane pass occupies residues Ser-14 to Leu-34. The Lumenal portion of the chain corresponds to Ser-35–Ser-74. Residues Leu-75–Gly-95 traverse the membrane as a helical segment. Over Ser-96–Asn-115 the chain is Cytoplasmic.

Belongs to the Tymovirales TGBp2 protein family.

Its subcellular location is the host endoplasmic reticulum membrane. Plays a role in viral cell-to-cell propagation, by facilitating genome transport to neighboring plant cells through plasmosdesmata,. This is Movement protein TGB2 from Potato virus X (strain HB) (PVX).